The sequence spans 196 residues: Small ribosomal subunit protein uS4c (196 aa).

Residues 15-42 (LGALPGLTRKTPKSGSNQKKKFNSGKKE) are disordered. An S4 RNA-binding domain is found at 89–150 (MRLDNILFRL…NQRSKRLVQN (62 aa)).

The protein belongs to the universal ribosomal protein uS4 family. In terms of assembly, part of the 30S ribosomal subunit. Contacts protein S5. The interaction surface between S4 and S5 is involved in control of translational fidelity.

The protein resides in the plastid. The protein localises to the chloroplast. Its function is as follows. One of the primary rRNA binding proteins, it binds directly to 16S rRNA where it nucleates assembly of the body of the 30S subunit. In terms of biological role, with S5 and S12 plays an important role in translational accuracy. The sequence is that of Small ribosomal subunit protein uS4c (rps4) from Cenchrus longisetus (Feathertop).